Consider the following 596-residue polypeptide: Aspartate--tRNA(Asp/Asn) ligase (596 aa).

Glu-175 serves as a coordination point for L-aspartate. An aspartate region spans residues Gln-199–Lys-202. Positions 221 and 454 each coordinate L-aspartate. An ATP-binding site is contributed by Arg-221 to Glu-223. An ATP-binding site is contributed by Glu-488. Arg-495 contacts L-aspartate. Gly-540 to Arg-543 contributes to the ATP binding site.

This sequence belongs to the class-II aminoacyl-tRNA synthetase family. Type 1 subfamily. As to quaternary structure, homodimer.

Its subcellular location is the cytoplasm. The catalysed reaction is tRNA(Asx) + L-aspartate + ATP = L-aspartyl-tRNA(Asx) + AMP + diphosphate. Aspartyl-tRNA synthetase with relaxed tRNA specificity since it is able to aspartylate not only its cognate tRNA(Asp) but also tRNA(Asn). Reaction proceeds in two steps: L-aspartate is first activated by ATP to form Asp-AMP and then transferred to the acceptor end of tRNA(Asp/Asn). This Rhizobium johnstonii (strain DSM 114642 / LMG 32736 / 3841) (Rhizobium leguminosarum bv. viciae) protein is Aspartate--tRNA(Asp/Asn) ligase.